A 389-amino-acid chain; its full sequence is Chaperone protein DnaJ (389 aa).

In terms of domain architecture, J spans 5–79; sequence KRDYYEVLGI…RKLYDQFGHE (75 aa). The CR-type zinc-finger motif lies at 151–234; it reads GCNKTIKYER…CRSNKYTVTN (84 aa). C164, C167, C182, C185, C208, C211, C222, and C225 together coordinate Zn(2+). CXXCXGXG motif repeat units lie at residues 164–171, 182–189, 208–215, and 222–229; these read CHSCNGFG, CKDCNGNG, CSTCNGQG, and CKTCRSNK.

The protein belongs to the DnaJ family. Homodimer. Zn(2+) serves as cofactor.

Its subcellular location is the cytoplasm. Its function is as follows. Participates actively in the response to hyperosmotic and heat shock by preventing the aggregation of stress-denatured proteins and by disaggregating proteins, also in an autonomous, DnaK-independent fashion. Unfolded proteins bind initially to DnaJ; upon interaction with the DnaJ-bound protein, DnaK hydrolyzes its bound ATP, resulting in the formation of a stable complex. GrpE releases ADP from DnaK; ATP binding to DnaK triggers the release of the substrate protein, thus completing the reaction cycle. Several rounds of ATP-dependent interactions between DnaJ, DnaK and GrpE are required for fully efficient folding. Also involved, together with DnaK and GrpE, in the DNA replication of plasmids through activation of initiation proteins. The polypeptide is Chaperone protein DnaJ (Mycoplasma genitalium (strain ATCC 33530 / DSM 19775 / NCTC 10195 / G37) (Mycoplasmoides genitalium)).